A 411-amino-acid polypeptide reads, in one-letter code: Class E basic helix-loop-helix protein 40 (411 aa).

The tract at residues 1-21 (MERIPSAQPPPTCLPKTPGLE) is disordered. Positions 1–139 (MERIPSAQPP…LSGKNIEAGQ (139 aa)) are essential for interaction with BMAL1, E-box binding and repressor activity against the CLOCK-BMAL1 heterodimer. Residues 52–107 (TYKLPHRLIEKKRRDRINECIAQLKDLLPEHLKLTTLGHLEKAVVLELTLKHVKAL) form the bHLH domain. The necessary for interaction with RXRA and repressor activity against RXRA stretch occupies residues 75–79 (LKDLL). In terms of domain architecture, Orange spans 142 to 175 (FCSGFQTCAREVLQYLAKHENTRDLKSSQLVTHL). K159 participates in a covalent cross-link: Glycyl lysine isopeptide (Lys-Gly) (interchain with G-Cter in SUMO1, SUMO2 and SUMO3). K167 participates in a covalent cross-link: Glycyl lysine isopeptide (Lys-Gly) (interchain with G-Cter in SUMO2). Residues 186–293 (SASRKPLDSA…EPPTKKSRMQ (108 aa)) are disordered. At S235 the chain carries Phosphoserine. Basic and acidic residues predominate over residues 248 to 271 (ELEKGDLRSEQPYFKSDHGRRFTV). A Glycyl lysine isopeptide (Lys-Gly) (interchain with G-Cter in SUMO1); alternate cross-link involves residue K279. K279 is covalently cross-linked (Glycyl lysine isopeptide (Lys-Gly) (interchain with G-Cter in SUMO1, SUMO2 and SUMO3); alternate). A Glycyl lysine isopeptide (Lys-Gly) (interchain with G-Cter in SUMO2); alternate cross-link involves residue K279. Residue K288 forms a Glycyl lysine isopeptide (Lys-Gly) (interchain with G-Cter in SUMO2) linkage. Residue S383 is modified to Phosphoserine.

Homodimer. Heterodimer with BHLHE41/DEC2. Interacts with TCF3/E47. Interacts with ubiquitin-conjugating enzyme UBE2I/UBC9. Interacts with HDAC1, SUMO1, RXRA and BMAL1. In terms of processing, ubiquitinated; which may lead to proteasomal degradation. Sumoylation inhibits its ubiquitination and promotes its negative regulation of the CLOCK-BMAL1 heterodimer transcriptional activator activity. Expressed in heart, spleen, lung, liver, muscle, kidney, uterus and gut. Highly expressed in the cerebral cortex, especially in the fifth layer, thalamus, superior colliculus, olfactory bulb, piriform cortex, hippocampus and hypothalamic nuclei.

Its subcellular location is the cytoplasm. It is found in the nucleus. Its function is as follows. Transcriptional repressor involved in the regulation of the circadian rhythm by negatively regulating the activity of the clock genes and clock-controlled genes. Acts as the negative limb of a novel autoregulatory feedback loop (DEC loop) which differs from the one formed by the PER and CRY transcriptional repressors (PER/CRY loop). Both these loops are interlocked as it represses the expression of PER1/2 and in turn is repressed by PER1/2 and CRY1/2. Represses the activity of the circadian transcriptional activator: CLOCK-BMAL1|BMAL2 heterodimer by competing for the binding to E-box elements (5'-CACGTG-3') found within the promoters of its target genes. Negatively regulates its own expression and the expression of DBP and BHLHE41/DEC2. Acts as a corepressor of RXR and the RXR-LXR heterodimers and represses the ligand-induced RXRA and NR1H3/LXRA transactivation activity. May be involved in the regulation of chondrocyte differentiation via the cAMP pathway. Represses the transcription of NR0B2 and attentuates the transactivation of NR0B2 by the CLOCK-BMAL1 complex. Drives the circadian rhythm of blood pressure through transcriptional repression of ATP1B1 in the cardiovascular system. This chain is Class E basic helix-loop-helix protein 40 (Bhlhe40), found in Rattus norvegicus (Rat).